The chain runs to 532 residues: Cytochrome P450 714B2 (532 aa).

The Lumenal segment spans residues 1–2; that stretch reads ME. The helical; Signal-anchor for type III membrane protein transmembrane segment at 3-23 threads the bilayer; the sequence is VGMVVVVAAKVLVSLWCVGAC. Topologically, residues 24 to 532 are cytoplasmic; it reads CLAAYLYRVV…LTRVQGAYRH (509 aa). Cysteine 474 serves as a coordination point for heme.

This sequence belongs to the cytochrome P450 family. It depends on heme as a cofactor. Highly expressed in shoot, spikelet and uppermost internode. Detected in roots, leaves and anthers.

Its subcellular location is the membrane. In terms of biological role, catalyzes the 13-hydroxylation of gibberellins (GAs). Determines the ratio of GA4 and GA1. Converts GA12 into GA53. The polypeptide is Cytochrome P450 714B2 (CYP714B2) (Oryza sativa subsp. japonica (Rice)).